An 837-amino-acid chain; its full sequence is Periplasmic nitrate reductase (837 aa).

Positions 1-31 form a signal peptide, tat-type signal; the sequence is MKLNRRDFIKANAAAAAISAAGLSVPGAAVA. The 4Fe-4S Mo/W bis-MGD-type domain maps to 37-93; the sequence is IRWDKAACRFCGTGCGVLVGTQDGRVVATQGDPDAPVNRGLNCIKGYFLSKIMYGAD. 4 residues coordinate [4Fe-4S] cluster: Cys44, Cys47, Cys51, and Cys79. Mo-bis(molybdopterin guanine dinucleotide) is bound by residues Lys81, Gln148, Asn173, Cys177, 210 to 217, 241 to 245, and 260 to 262; these read WGSNMAEM, STFEH, and QTD. A disordered region spans residues 308–329; that stretch reads EKNATSNGYPDADGKPKGDTGK. Residues 319–329 are compositionally biased toward basic and acidic residues; that stretch reads ADGKPKGDTGK. Residues Met381, Gln385, Asn491, 517–518, Lys540, Asp567, and 727–736 each bind Mo-bis(molybdopterin guanine dinucleotide); these read SD and TGRVLEHWHT. Phe803 serves as a coordination point for substrate. Asn811 and Lys828 together coordinate Mo-bis(molybdopterin guanine dinucleotide).

Belongs to the prokaryotic molybdopterin-containing oxidoreductase family. NasA/NapA/NarB subfamily. Component of the periplasmic nitrate reductase NapAB complex composed of NapA and NapB. It depends on [4Fe-4S] cluster as a cofactor. Requires Mo-bis(molybdopterin guanine dinucleotide) as cofactor. Predicted to be exported by the Tat system. The position of the signal peptide cleavage has not been experimentally proven.

The protein localises to the periplasm. The catalysed reaction is 2 Fe(II)-[cytochrome] + nitrate + 2 H(+) = 2 Fe(III)-[cytochrome] + nitrite + H2O. Catalytic subunit of the periplasmic nitrate reductase complex NapAB. Receives electrons from NapB and catalyzes the reduction of nitrate to nitrite. This Dechloromonas aromatica (strain RCB) protein is Periplasmic nitrate reductase.